Consider the following 1004-residue polypeptide: BLOC-2 complex member HPS3 (1004 aa).

Residues 172 to 176 (LLDFE) carry the Clathrin-binding motif.

Component of the biogenesis of lysosome-related organelles complex-2 (or BLOC2) composed of HPS3, HPS5 and HPS6. Interacts with HPS5. Interacts with HPS6. In terms of tissue distribution, widely expressed. Higher levels of expression are observed in kidney, liver and placenta.

The protein resides in the cytoplasm. Its subcellular location is the cytosol. Functionally, involved in early stages of melanosome biogenesis and maturation. The sequence is that of BLOC-2 complex member HPS3 (HPS3) from Homo sapiens (Human).